The chain runs to 405 residues: Type II secretion system protein F (405 aa).

Topologically, residues 1 to 169 (MPLYRYKALD…SRALKGKVIN (169 aa)) are cytoplasmic. The Ca(2+) site is built by D98, Q151, and D155. The chain crosses the membrane as a helical span at residues 170–190 (ALIYPAILLAVVGCALLFLLG). Residues 191-218 (YVVPQFAQMYESLDVALPWFTQAVLSVG) lie on the Periplasmic side of the membrane. A helical membrane pass occupies residues 219 to 239 (LLVRDWWLVLVVIPGVLGLWL). At 240 to 370 (DRKRRNAAFR…LETAQAIDRA (131 aa)) the chain is on the cytoplasmic side. Residues 371-391 (LAALVPLITLVLASVVGLVII) traverse the membrane as a helical segment. Topologically, residues 392–405 (SVLVPLYDLTNAIG) are periplasmic.

This sequence belongs to the GSP F family. As to quaternary structure, type II secretion system is composed of four main components: the outer membrane complex, the inner membrane complex, the cytoplasmic secretion ATPase and the periplasm-spanning pseudopilus. Homodimer. Interacts with XpsE and XpsL components.

The protein localises to the cell inner membrane. In terms of biological role, component of the type II secretion system inner membrane complex required for the energy-dependent secretion of extracellular factors such as proteases and toxins from the periplasm. The sequence is that of Type II secretion system protein F (xpsF) from Xanthomonas campestris pv. campestris (strain ATCC 33913 / DSM 3586 / NCPPB 528 / LMG 568 / P 25).